We begin with the raw amino-acid sequence, 154 residues long: Lipoprotein signal peptidase (154 aa).

The next 2 membrane-spanning stretches (helical) occupy residues 55-75 and 84-104; these read GHMW…IYIM and LFSI…IDRI. Active-site residues include Asp111 and Asp129. A helical transmembrane segment spans residues 124 to 144; it reads IFNVADAALSVGVVLMLVYVF.

The protein belongs to the peptidase A8 family.

The protein resides in the cell membrane. The catalysed reaction is Release of signal peptides from bacterial membrane prolipoproteins. Hydrolyzes -Xaa-Yaa-Zaa-|-(S,diacylglyceryl)Cys-, in which Xaa is hydrophobic (preferably Leu), and Yaa (Ala or Ser) and Zaa (Gly or Ala) have small, neutral side chains.. It functions in the pathway protein modification; lipoprotein biosynthesis (signal peptide cleavage). Functionally, this protein specifically catalyzes the removal of signal peptides from prolipoproteins. The protein is Lipoprotein signal peptidase of Listeria innocua serovar 6a (strain ATCC BAA-680 / CLIP 11262).